A 455-amino-acid polypeptide reads, in one-letter code: Venom prothrombin activator hopsarin-D (455 aa).

The N-terminal stretch at 1–20 (MAPQLLLCLILTFLWSVPEA) is a signal peptide. The propeptide occupies 21–40 (ESNVFLKSKVANRFLQRTKR). A Gla domain is found at 41–86 (SNSLFEEIRPGNIERECIEEKCSKEEAREVFEDNEKTETFWNVYVD). Glu-46, Glu-47, Glu-54, Glu-56, Glu-59, Glu-60, Glu-65, Glu-66, Glu-69, Glu-72, and Glu-75 each carry 4-carboxyglutamate. Cys-57 and Cys-62 are oxidised to a cystine. The EGF-like 1; calcium-binding domain occupies 86-121 (DGDQCSSNPCHYHGTCKDGIGSYTCTCLPNYEGKNC). Intrachain disulfides connect Cys-90-Cys-101, Cys-95-Cys-110, Cys-112-Cys-121, Cys-129-Cys-140, Cys-136-Cys-149, Cys-151-Cys-164, Cys-172-Cys-328, Cys-236-Cys-252, Cys-376-Cys-390, and Cys-401-Cys-429. Ser-92 is a glycosylation site (O-linked (Hex...) serine). One can recognise an EGF-like 2 domain in the interval 129-164 (CRAFNGNCWHFCKRVQSETQCSCAESYRLGVDGHSC). Positions 182–209 (REASLPDFVQSQKATLLKKSDNPSPDIR) are cleaved as a propeptide — activation peptide. The Peptidase S1 domain maps to 210 to 453 (IVNGMDSKLG…FIPWIKKIMS (244 aa)). His-251 (charge relay system) is an active-site residue. Asn-254 carries an N-linked (GlcNAc...) asparagine glycan. Asp-308 functions as the Charge relay system in the catalytic mechanism. Catalysis depends on Ser-405, which acts as the Charge relay system.

Belongs to the peptidase S1 family. Snake venom subfamily. As to quaternary structure, heterodimer of a light chain and a heavy chain; disulfide-linked. The vitamin K-dependent, enzymatic carboxylation of some glutamate residues allows the modified protein to bind calcium. As to expression, expressed by the venom gland.

It localises to the secreted. It catalyses the reaction Selective cleavage of Arg-|-Thr and then Arg-|-Ile bonds in prothrombin to form thrombin.. Its function is as follows. Snake prothrombin activator that attacks the hemostatic system of prey. This protein is functionally similar to blood coagulation factor Xa. The procoagulant activity of hopsarin-D is approximately 10-fold lower than that of trocarin-D and FXa. This is Venom prothrombin activator hopsarin-D from Hoplocephalus stephensii (Stephens's banded snake).